The chain runs to 507 residues: WD-40 repeat-containing protein MSI4 (507 aa).

At Met1 the chain carries N-acetylmethionine. Residues 1-66 (MESDEAAAVS…KTQQSPSVDE (66 aa)) are disordered. WD repeat units lie at residues 95–137 (RWGP…KPRV), 162–202 (IHPG…NRHA), and 217–257 (GHQD…TTIG). The segment covering 258–272 (TDSKSSGSIIKQTGE) has biased composition (polar residues). Residues 258 to 282 (TDSKSSGSIIKQTGEGTDKNESPTV) form a disordered region. WD repeat units follow at residues 290-330 (GHED…NPVT), 335-375 (AHDA…ANGV), 384-424 (GHKA…KKSD), and 439-486 (GHRD…YRPE). The DWD box signature appears at 308 to 323 (FCSVGDDSCLILWDAR).

The protein belongs to the WD repeat RBAP46/RBAP48/MSI1 family. Interacts with AHL16 and HOS1. Interacts with LHP1, PDP1, PDP2 and PDP3. Component of the PRC2 (polycomb repressive complex 2) complex which regulates histone methylation on histone H3K27. As to expression, expressed in rosette leaves, cauline leaves, main stems and developing fruits. Expressed at higher levels in roots and flowers.

It is found in the nucleus. Its function is as follows. Core histone-binding subunit that may target chromatin assembly factors, chromatin remodeling factors and histone deacetylases to their histone substrates in a manner that is regulated by nucleosomal DNA. Component of the flowering autonomous pathway which positively regulates flowering by promoting transcriptional repression of the flowering repressor FLC. May promote histone deacetylation at the FLC locus leading to the formation of repressive chromatin structures. Forms a histone deacetylase complex with HDA5, HDA6 and FLD that represses FLC gene expression to control flowering time. Also negatively regulates cold-responsive genes. Acts together with PDP1 and MSI5 to regulate the function of the PRC2 complex on FLC. Required for systemic acquired resistance (SAR) toward pathogenic bacteria (e.g. Pseudomonas syringae pv tomato DC3000 (avrPto)). Together with FLD and MSI4/FVE, contributes to dehydroabietinal-dependent (DA, a diterpenoid tricyclic diterpene) activation of flowering ans SAR. This is WD-40 repeat-containing protein MSI4 from Arabidopsis thaliana (Mouse-ear cress).